We begin with the raw amino-acid sequence, 454 residues long: Bifunctional protein GlmU (454 aa).

Residues 1-226 form a pyrophosphorylase region; sequence MSLNVVILAA…AIEVEGANNR (226 aa). UDP-N-acetyl-alpha-D-glucosamine-binding positions include 8 to 11, lysine 22, glutamine 73, 78 to 79, 100 to 102, glycine 137, glutamate 151, asparagine 166, and asparagine 224; these read LAAG, GT, and YGD. A Mg(2+)-binding site is contributed by aspartate 102. A Mg(2+)-binding site is contributed by asparagine 224. Residues 227–247 form a linker region; that stretch reads VQLAQLERAYQARAAEKMMLE. An N-acetyltransferase region spans residues 248–454; sequence GANLRDPARI…GWQRPIKIKK (207 aa). The UDP-N-acetyl-alpha-D-glucosamine site is built by arginine 330 and lysine 348. Histidine 360 functions as the Proton acceptor in the catalytic mechanism. 2 residues coordinate UDP-N-acetyl-alpha-D-glucosamine: tyrosine 363 and asparagine 374. Acetyl-CoA is bound by residues alanine 377, 383-384, serine 402, alanine 420, and arginine 437; that span reads NY.

The protein in the N-terminal section; belongs to the N-acetylglucosamine-1-phosphate uridyltransferase family. It in the C-terminal section; belongs to the transferase hexapeptide repeat family. Homotrimer. It depends on Mg(2+) as a cofactor.

It is found in the cytoplasm. It catalyses the reaction alpha-D-glucosamine 1-phosphate + acetyl-CoA = N-acetyl-alpha-D-glucosamine 1-phosphate + CoA + H(+). It carries out the reaction N-acetyl-alpha-D-glucosamine 1-phosphate + UTP + H(+) = UDP-N-acetyl-alpha-D-glucosamine + diphosphate. It functions in the pathway nucleotide-sugar biosynthesis; UDP-N-acetyl-alpha-D-glucosamine biosynthesis; N-acetyl-alpha-D-glucosamine 1-phosphate from alpha-D-glucosamine 6-phosphate (route II): step 2/2. It participates in nucleotide-sugar biosynthesis; UDP-N-acetyl-alpha-D-glucosamine biosynthesis; UDP-N-acetyl-alpha-D-glucosamine from N-acetyl-alpha-D-glucosamine 1-phosphate: step 1/1. The protein operates within bacterial outer membrane biogenesis; LPS lipid A biosynthesis. In terms of biological role, catalyzes the last two sequential reactions in the de novo biosynthetic pathway for UDP-N-acetylglucosamine (UDP-GlcNAc). The C-terminal domain catalyzes the transfer of acetyl group from acetyl coenzyme A to glucosamine-1-phosphate (GlcN-1-P) to produce N-acetylglucosamine-1-phosphate (GlcNAc-1-P), which is converted into UDP-GlcNAc by the transfer of uridine 5-monophosphate (from uridine 5-triphosphate), a reaction catalyzed by the N-terminal domain. The polypeptide is Bifunctional protein GlmU (Shewanella frigidimarina (strain NCIMB 400)).